The chain runs to 121 residues: Ribonuclease P protein component (121 aa).

Belongs to the RnpA family. In terms of assembly, consists of a catalytic RNA component (M1 or rnpB) and a protein subunit.

It carries out the reaction Endonucleolytic cleavage of RNA, removing 5'-extranucleotides from tRNA precursor.. RNaseP catalyzes the removal of the 5'-leader sequence from pre-tRNA to produce the mature 5'-terminus. It can also cleave other RNA substrates such as 4.5S RNA. The protein component plays an auxiliary but essential role in vivo by binding to the 5'-leader sequence and broadening the substrate specificity of the ribozyme. This Desulfosudis oleivorans (strain DSM 6200 / JCM 39069 / Hxd3) (Desulfococcus oleovorans) protein is Ribonuclease P protein component.